The sequence spans 177 residues: Large ribosomal subunit protein uL6 (177 aa).

Belongs to the universal ribosomal protein uL6 family. In terms of assembly, part of the 50S ribosomal subunit.

Its function is as follows. This protein binds to the 23S rRNA, and is important in its secondary structure. It is located near the subunit interface in the base of the L7/L12 stalk, and near the tRNA binding site of the peptidyltransferase center. The sequence is that of Large ribosomal subunit protein uL6 from Pseudomonas syringae pv. syringae (strain B728a).